A 201-amino-acid polypeptide reads, in one-letter code: Diadenylate cyclase CdaS (201 aa).

The region spanning 54–201 (QTLAATYYIQ…LNGILYTISL (148 aa)) is the DAC domain.

It belongs to the adenylate cyclase family. DacB/CdaS subfamily. Probably forms a homohexamer. The cofactor is Mg(2+).

It carries out the reaction 2 ATP = 3',3'-c-di-AMP + 2 diphosphate. Its function is as follows. One of 3 paralogous diadenylate cyclases (DAC) in this bacteria catalyzing the condensation of 2 ATP molecules into cyclic di-AMP (c-di-AMP). It has slow DAC activity with ADP as a substrate and may have weak ADPase activity. Required for efficient spore formation, whereas in B.subtilis, it is required for efficient spore germination. It is produced under the control of different sigma factors in the two bacteria. It is also required for parasporal crystal formation. The polypeptide is Diadenylate cyclase CdaS (Bacillus thuringiensis (strain BMB171)).